We begin with the raw amino-acid sequence, 630 residues long: Polyphenol oxidase A, chloroplastic (630 aa).

A disordered region spans residues 1-25; it reads MASLCSNSSSTSLKTPFTSSTTCLS. The N-terminal 87 residues, 1–87, are a transit peptide targeting the chloroplast; the sequence is MASLCSNSSS…ANAIPLAASA (87 aa). Disulfide bonds link cysteine 98–cysteine 114 and cysteine 113–cysteine 181. Residues histidine 180, histidine 198, histidine 207, histidine 328, histidine 332, and histidine 370 each contribute to the Cu cation site. The 2'-(S-cysteinyl)-histidine (Cys-His) cross-link spans 184–198; the sequence is CNGGYSIDGKVLQVH.

Belongs to the tyrosinase family. Cu(2+) is required as a cofactor.

It localises to the plastid. It is found in the chloroplast thylakoid lumen. The catalysed reaction is 2 catechol + O2 = 2 1,2-benzoquinone + 2 H2O. Catalyzes the oxidation of mono- and o-diphenols to o-diquinones. The sequence is that of Polyphenol oxidase A, chloroplastic from Solanum lycopersicum (Tomato).